A 217-amino-acid chain; its full sequence is Adenylate kinase (217 aa).

ATP is bound at residue 10–15 (GAGKGT). The tract at residues 30 to 59 (STGDIFRSNIKNGTELGRKAKEYIDKGLLV) is NMP. AMP is bound by residues threonine 31, arginine 36, 57–59 (LLV), 85–88 (GFPR), and glutamine 92. The interval 126–163 (GRRVCSKCGMSYHIVYNQPKVENICDSCNGELIQRDDD) is LID. Arginine 127 lines the ATP pocket. Residues cysteine 130 and cysteine 133 each contribute to the Zn(2+) site. An ATP-binding site is contributed by 136 to 137 (SY). Residues cysteine 150 and cysteine 153 each contribute to the Zn(2+) site. 2 residues coordinate AMP: arginine 160 and arginine 171. Glutamate 199 provides a ligand contact to ATP.

This sequence belongs to the adenylate kinase family. As to quaternary structure, monomer.

Its subcellular location is the cytoplasm. It carries out the reaction AMP + ATP = 2 ADP. It participates in purine metabolism; AMP biosynthesis via salvage pathway; AMP from ADP: step 1/1. Catalyzes the reversible transfer of the terminal phosphate group between ATP and AMP. Plays an important role in cellular energy homeostasis and in adenine nucleotide metabolism. In Acetivibrio thermocellus (strain ATCC 27405 / DSM 1237 / JCM 9322 / NBRC 103400 / NCIMB 10682 / NRRL B-4536 / VPI 7372) (Clostridium thermocellum), this protein is Adenylate kinase.